The following is a 559-amino-acid chain: MAKSMRTIKNPFFTSHPPSPFFHLSLLFFTPLKKSSPRYLNHHHQTRCPPPQFFLLLISLSLVFSGISFLTFSLDTGSSTCVSTSSASSLKFFISDVDHRQILTSLAVSGASTLFPLPARGGHSGNMTEEEKEFWKQPNGEGYKPCLDFSLEYKKKSASVSKEKKRFLVVVVSGGLNQQRNQIVDAVVIAMILEAALVVPVLQVNRVWGDESEFSDLFDVEHFKKTLRSDVRIVSSLPSTHLMSRQTIENQIPWDVSPVWIRAKYFKQLNEEGLLVLKGLDSKLAKNLPPDLQKLRCKVAFHALRFAAPIENLGNKLTRRMWIEGPYIALHLRLEKDVWVRTGCLTGLGSEFDRIIAETRTSQPRYLTGRLNLTYTERRLAGFCPLNVYEIARLLKALGAPSNASIYIAGGEPFGGSRALEPLAKEFSNLVTKETLAHKGELLPYTNRSSALAAIDYIVSLSSDVFIPSHGGNMAKAMQGNRAYVGHRKFIMPNKRAMLPLMENSSVSDAELSFLTRKLHRKSQGYPESRRGRRDRDVIAYPVPECMCRHRKHRSVGFF.

A helical; Signal-anchor for type II membrane protein membrane pass occupies residues 53 to 73 (FFLLLISLSLVFSGISFLTFS). Asn126 carries N-linked (GlcNAc...) asparagine glycosylation. 331 to 333 (HLR) lines the substrate pocket. 4 N-linked (GlcNAc...) asparagine glycosylation sites follow: Asn372, Asn403, Asn447, and Asn504.

It belongs to the glycosyltransferase GT106 family.

The protein resides in the membrane. It functions in the pathway glycan metabolism. This Arabidopsis thaliana (Mouse-ear cress) protein is O-fucosyltransferase 37.